Reading from the N-terminus, the 192-residue chain is Phosphomevalonate kinase (192 aa).

ATP is bound by residues 17-23 (KRKSGKD) and R141. N170 is a substrate binding site. ATP-binding residues include H171 and Q180.

Monomer.

Its subcellular location is the cytoplasm. The protein localises to the cytosol. The catalysed reaction is (R)-5-phosphomevalonate + ATP = (R)-5-diphosphomevalonate + ADP. It functions in the pathway isoprenoid biosynthesis; isopentenyl diphosphate biosynthesis via mevalonate pathway; isopentenyl diphosphate from (R)-mevalonate: step 2/3. Catalyzes the reversible ATP-dependent phosphorylation of mevalonate 5-phosphate to produce mevalonate diphosphate and ADP, a key step in the mevalonic acid mediated biosynthesis of isopentenyl diphosphate and other polyisoprenoid metabolites. The sequence is that of Phosphomevalonate kinase (Pmvk) from Mus musculus (Mouse).